The following is a 377-amino-acid chain: NADH dehydrogenase [ubiquinone] 1 alpha subcomplex subunit 9, mitochondrial (377 aa).

A mitochondrion-targeting transit peptide spans 1–35; it reads MAAAAQSRVVRVLSMSRSAITAIATSVCHGPPCRQ. At Lys175 the chain carries N6-succinyllysine. N6-acetyllysine is present on residues Lys189 and Lys370.

It belongs to the complex I NDUFA9 subunit family. Complex I is composed of 45 different subunits. This a component of the hydrophobic protein fraction. Interacts with BLOC1S1. Interacts with SLC2A4. Interacts with CLOCK. Interacts with RAB5IF. The cofactor is FAD. Acetylated on lysine residues. BLOC1S1 is required for acetylation. Acetylated by CLOCK in a circadian manner.

The protein resides in the mitochondrion matrix. Functionally, accessory subunit of the mitochondrial membrane respiratory chain NADH dehydrogenase (Complex I), that is believed not to be involved in catalysis. Complex I functions in the transfer of electrons from NADH to the respiratory chain. The immediate electron acceptor for the enzyme is believed to be ubiquinone. The protein is NADH dehydrogenase [ubiquinone] 1 alpha subcomplex subunit 9, mitochondrial (NDUFA9) of Pan troglodytes (Chimpanzee).